The primary structure comprises 505 residues: Bile acid-sensitive ion channel (505 aa).

The segment at Met1 to Ser30 is binds the plasma membrane and stabilizes the channel in the closed state. Residues Met1–Arg61 lie on the Cytoplasmic side of the membrane. A helical transmembrane segment spans residues Arg62–Ile82. Over Arg83–Thr459 the chain is Extracellular. 6 disulfides stabilise this stretch: Cys112-Cys207, Cys185-Cys192, Cys298-Cys377, Cys315-Cys373, Cys328-Cys350, and Cys330-Cys342. 4 N-linked (GlcNAc...) asparagine glycosylation sites follow: Asn147, Asn163, Asn178, and Asn179. A glycan (N-linked (GlcNAc...) asparagine) is linked at Asn306. N-linked (GlcNAc...) asparagine glycans are attached at residues Asn370, Asn405, and Asn421. The short motif at Gly454 to Ser456 is the GAS motif; ion selectivity filter element. A helical transmembrane segment spans residues Ile460–Leu480. Topologically, residues Lys481–Cys505 are cytoplasmic.

Belongs to the amiloride-sensitive sodium channel (TC 1.A.6) family. ASIC5 subfamily. In terms of assembly, forms homotrimeric channels. Detected in small intestine, duodenum and jejunum. Detected at very low levels in testis and rectum.

The protein localises to the apical cell membrane. It localises to the cell membrane. It carries out the reaction Na(+)(in) = Na(+)(out). It catalyses the reaction Li(+)(in) = Li(+)(out). The catalysed reaction is K(+)(in) = K(+)(out). The enzyme catalyses H(+)(in) = H(+)(out). With respect to regulation, inhibited by the diuretic drug amiloride. Its function is as follows. Forms bile acid-gated sodium channels and may play a role in bile acid-dependent absorption and secretion by epithelial cells of the bile ducts. Displays high selectivity for sodium ions but can also permit the permeation of other cations. The gating could be indirect and the consequence of alterations of the membrane environment of the channel by bile acids. As a sodium channel of type II unipolar brush cells of the vestibulocerebellum, controlling the electrical activity of these cells, could play a role in motor coordination and balance. The chain is Bile acid-sensitive ion channel from Homo sapiens (Human).